The chain runs to 347 residues: NADH-quinone oxidoreductase subunit H (347 aa).

A run of 8 helical transmembrane segments spans residues 21–41 (VAGI…IIYA), 87–107 (GLFL…WAVI), 118–138 (INVG…GVIL), 157–177 (AQMI…VLFA), 195–215 (GIVN…MFLI), 258–278 (NVLL…LPPI), 283–303 (LYAV…FFVF), and 323–343 (WKIF…YLML).

This sequence belongs to the complex I subunit 1 family. NDH-1 is composed of 14 different subunits. Subunits NuoA, H, J, K, L, M, N constitute the membrane sector of the complex.

It is found in the cell inner membrane. The enzyme catalyses a quinone + NADH + 5 H(+)(in) = a quinol + NAD(+) + 4 H(+)(out). In terms of biological role, NDH-1 shuttles electrons from NADH, via FMN and iron-sulfur (Fe-S) centers, to quinones in the respiratory chain. The immediate electron acceptor for the enzyme in this species is believed to be ubiquinone. Couples the redox reaction to proton translocation (for every two electrons transferred, four hydrogen ions are translocated across the cytoplasmic membrane), and thus conserves the redox energy in a proton gradient. This subunit may bind ubiquinone. This chain is NADH-quinone oxidoreductase subunit H, found in Sphingopyxis alaskensis (strain DSM 13593 / LMG 18877 / RB2256) (Sphingomonas alaskensis).